The primary structure comprises 310 residues: Imidazolonepropionase (310 aa).

Residues Y42 and H75 each coordinate 4-imidazolone-5-propanoate. Residue Y42 participates in N-formimidoyl-L-glutamate binding. H140 lines the Fe(3+) pocket. Residue H140 participates in Zn(2+) binding. 4-imidazolone-5-propanoate is bound at residue E143. D215 contacts Fe(3+). D215 is a Zn(2+) binding site. The N-formimidoyl-L-glutamate site is built by N217 and G219. S220 provides a ligand contact to 4-imidazolone-5-propanoate.

It belongs to the metallo-dependent hydrolases superfamily. HutI family. Zn(2+) is required as a cofactor. Requires Fe(3+) as cofactor.

It is found in the cytoplasm. The enzyme catalyses 4-imidazolone-5-propanoate + H2O = N-formimidoyl-L-glutamate. The protein operates within amino-acid degradation; L-histidine degradation into L-glutamate; N-formimidoyl-L-glutamate from L-histidine: step 3/3. Its function is as follows. Catalyzes the hydrolytic cleavage of the carbon-nitrogen bond in imidazolone-5-propanoate to yield N-formimidoyl-L-glutamate. It is the third step in the universal histidine degradation pathway. The polypeptide is Imidazolonepropionase (hutI) (Streptococcus gordonii).